A 203-amino-acid chain; its full sequence is Molybdenum cofactor guanylyltransferase (203 aa).

GTP-binding positions include 20–22 (LAG), lysine 33, asparagine 61, aspartate 78, and aspartate 108. Aspartate 108 is a binding site for Mg(2+).

It belongs to the MobA family. In terms of assembly, monomer. Requires Mg(2+) as cofactor.

It is found in the cytoplasm. It carries out the reaction Mo-molybdopterin + GTP + H(+) = Mo-molybdopterin guanine dinucleotide + diphosphate. Its function is as follows. Transfers a GMP moiety from GTP to Mo-molybdopterin (Mo-MPT) cofactor (Moco or molybdenum cofactor) to form Mo-molybdopterin guanine dinucleotide (Mo-MGD) cofactor. The protein is Molybdenum cofactor guanylyltransferase of Vibrio cholerae serotype O1 (strain ATCC 39315 / El Tor Inaba N16961).